Consider the following 6995-residue polypeptide: Fibrous sheath-interacting protein 2 (6995 aa).

3 disordered regions span residues 273–292 (EQKI…RKKQ), 308–336 (DTGL…SSKK), and 351–476 (GDQK…TDAP). Residues 359 to 396 (TSGQVSATVNQSQSSSKDVTKVSASSVTYPAEVQNSSS) show a composition bias toward polar residues. A compositionally biased stretch (basic and acidic residues) spans 397 to 421 (EQKRSEVTKRLSDERGKNSTDDSAR). Polar residues predominate over residues 424 to 442 (IISTQLSPTRNAKLSQISL). Ser430 carries the phosphoserine modification. A compositionally biased stretch (basic and acidic residues) spans 443 to 452 (DHQKEEKEMK). A compositionally biased stretch (polar residues) spans 453-463 (STWNGGLSKKS). The stretch at 665–692 (LEISLLYDKKAKAMDQIKNLKNVFVNFK) forms a coiled coil. 9 disordered regions span residues 1452–1472 (PDPQ…DPPT), 2554–2595 (KSKR…VPQM), 2699–2731 (TKTK…TPQV), 3182–3270 (PVKM…PNFT), 5489–5665 (GPSA…KYKG), 5719–5740 (SKSS…MTEK), 5823–5878 (KDLS…SKSK), 5943–5996 (KEDE…PDKL), and 6973–6995 (SKVF…QDKR). Residues 2555-2565 (SKREGEMHDSS) are compositionally biased toward basic and acidic residues. Residues 3187–3204 (PSNTSDTPRTRRSSQGSV) show a composition bias toward polar residues. The span at 3220–3231 (SVTSNSSSHISS) shows a compositional bias: low complexity. Residues 3232–3250 (CVENTNKSLEPMGRSNSEA) are compositionally biased toward polar residues. The segment covering 3255–3265 (SRHKAHDHGQR) has biased composition (basic residues). Basic and acidic residues predominate over residues 5496–5509 (DAKKEDESKVKPAT). Polar residues-rich tracts occupy residues 5523–5557 (MKSQ…SPPT), 5565–5625 (QVQQ…QSAM), and 5638–5650 (VQES…TTMK). Basic and acidic residues-rich tracts occupy residues 5719-5738 (SKSS…ETMT) and 5829-5877 (GHRD…ESKS). The segment covering 5982-5993 (SDVQKTPEQSSP) has biased composition (polar residues). A compositionally biased stretch (low complexity) spans 6977–6995 (SRSSGSIPKSSSPPHQDKR).

May interact with AKAP4. In terms of tissue distribution, predominantly expressed in testis.

Functionally, plays a role in spermatogenesis. The polypeptide is Fibrous sheath-interacting protein 2 (Fsip2) (Mus musculus (Mouse)).